The following is a 396-amino-acid chain: Acetyl-CoA acetyltransferase (396 aa).

The Acyl-thioester intermediate role is filled by C88. Catalysis depends on proton acceptor residues H352 and C382.

The protein belongs to the thiolase-like superfamily. Thiolase family. As to quaternary structure, homotetramer.

The enzyme catalyses 2 acetyl-CoA = acetoacetyl-CoA + CoA. It functions in the pathway biopolymer metabolism; poly-(R)-3-hydroxybutanoate biosynthesis. When expressed in E.coli with Synechocystis PhaB, PhaC and PhaE confers the ability to synthesize up to 12% (w/w) poly(3-hydroxybutyrate) (PHB) depending on the carbon source. This Synechocystis sp. (strain ATCC 27184 / PCC 6803 / Kazusa) protein is Acetyl-CoA acetyltransferase.